The chain runs to 185 residues: Inner membrane-spanning protein YciB (185 aa).

Helical transmembrane passes span 27-47, 53-73, 76-96, 118-138, and 149-169; these read IVLVVATILQIVILKWKYGIV, IMASAVVFFGLLTAYFNEIRY, WKVTIINGLFAIVLLVAQFQF, TLNLGWALFFIICMLVNIYIS, and FKSFGIIGMTVIATIISGVYI.

Belongs to the YciB family.

It is found in the cell inner membrane. Plays a role in cell envelope biogenesis, maintenance of cell envelope integrity and membrane homeostasis. The sequence is that of Inner membrane-spanning protein YciB from Haemophilus influenzae (strain 86-028NP).